A 623-amino-acid polypeptide reads, in one-letter code: UvrABC system protein C (623 aa).

Positions 12–91 constitute a GIY-YIG domain; that stretch reads FSPGVYLYKD…IKQYKPRFNI (80 aa). The region spanning 201 to 236 is the UVR domain; the sequence is SDLARGLRARMEAASLEMRFEEAAGLRDLITTVEEI. A disordered region spans residues 604–623; sequence PVASVAQSEDAAPDVPDPQA.

Belongs to the UvrC family. As to quaternary structure, interacts with UvrB in an incision complex.

Its subcellular location is the cytoplasm. In terms of biological role, the UvrABC repair system catalyzes the recognition and processing of DNA lesions. UvrC both incises the 5' and 3' sides of the lesion. The N-terminal half is responsible for the 3' incision and the C-terminal half is responsible for the 5' incision. In Solibacter usitatus (strain Ellin6076), this protein is UvrABC system protein C.